The sequence spans 602 residues: Elongation factor 4 (602 aa).

The tr-type G domain maps to 7 to 190 (KHIRNFCIVA…AVVQKVPAPS (184 aa)). GTP contacts are provided by residues 19 to 24 (DHGKST) and 137 to 140 (NKID).

This sequence belongs to the TRAFAC class translation factor GTPase superfamily. Classic translation factor GTPase family. LepA subfamily.

It localises to the cell membrane. The catalysed reaction is GTP + H2O = GDP + phosphate + H(+). Functionally, required for accurate and efficient protein synthesis under certain stress conditions. May act as a fidelity factor of the translation reaction, by catalyzing a one-codon backward translocation of tRNAs on improperly translocated ribosomes. Back-translocation proceeds from a post-translocation (POST) complex to a pre-translocation (PRE) complex, thus giving elongation factor G a second chance to translocate the tRNAs correctly. Binds to ribosomes in a GTP-dependent manner. The protein is Elongation factor 4 of Clostridium acetobutylicum (strain ATCC 824 / DSM 792 / JCM 1419 / IAM 19013 / LMG 5710 / NBRC 13948 / NRRL B-527 / VKM B-1787 / 2291 / W).